The primary structure comprises 238 residues: Ribonuclease PH (238 aa).

Phosphate contacts are provided by residues arginine 86 and glycine 124–arginine 126.

The protein belongs to the RNase PH family. In terms of assembly, homohexameric ring arranged as a trimer of dimers.

It catalyses the reaction tRNA(n+1) + phosphate = tRNA(n) + a ribonucleoside 5'-diphosphate. Phosphorolytic 3'-5' exoribonuclease that plays an important role in tRNA 3'-end maturation. Removes nucleotide residues following the 3'-CCA terminus of tRNAs; can also add nucleotides to the ends of RNA molecules by using nucleoside diphosphates as substrates, but this may not be physiologically important. Probably plays a role in initiation of 16S rRNA degradation (leading to ribosome degradation) during starvation. The protein is Ribonuclease PH of Salmonella agona (strain SL483).